Here is a 347-residue protein sequence, read N- to C-terminus: D-alanine--D-alanine ligase (347 aa).

In terms of domain architecture, ATP-grasp spans 134 to 332; it reads KLYAKDLGVK…LAQSLPKTPK (199 aa). 161–216 contributes to the ATP binding site; sequence LIKFNFPFIVKPSNAGSSLGVNVVKEEKELVYALDSAFEYSKEVLIEPFIQGVKEY. Mg(2+)-binding residues include Asp-288, Glu-300, and Asn-302.

The protein belongs to the D-alanine--D-alanine ligase family. It depends on Mg(2+) as a cofactor. Mn(2+) is required as a cofactor.

The protein localises to the cytoplasm. It carries out the reaction 2 D-alanine + ATP = D-alanyl-D-alanine + ADP + phosphate + H(+). It functions in the pathway cell wall biogenesis; peptidoglycan biosynthesis. Its function is as follows. Cell wall formation. This is D-alanine--D-alanine ligase from Helicobacter pylori (strain P12).